The sequence spans 260 residues: Pyridoxine 5'-phosphate synthase (260 aa).

Asn15 is a binding site for 3-amino-2-oxopropyl phosphate. A 1-deoxy-D-xylulose 5-phosphate-binding site is contributed by Asp17–His18. Residue Arg26 participates in 3-amino-2-oxopropyl phosphate binding. His51 serves as the catalytic Proton acceptor. 1-deoxy-D-xylulose 5-phosphate is bound by residues Arg53 and His58. The active-site Proton acceptor is Glu78. Thr108 serves as a coordination point for 1-deoxy-D-xylulose 5-phosphate. Residue His199 is the Proton donor of the active site. 3-amino-2-oxopropyl phosphate-binding positions include Gly200 and Gly221 to His222.

It belongs to the PNP synthase family. As to quaternary structure, homooctamer; tetramer of dimers.

The protein resides in the cytoplasm. The enzyme catalyses 3-amino-2-oxopropyl phosphate + 1-deoxy-D-xylulose 5-phosphate = pyridoxine 5'-phosphate + phosphate + 2 H2O + H(+). Its pathway is cofactor biosynthesis; pyridoxine 5'-phosphate biosynthesis; pyridoxine 5'-phosphate from D-erythrose 4-phosphate: step 5/5. In terms of biological role, catalyzes the complicated ring closure reaction between the two acyclic compounds 1-deoxy-D-xylulose-5-phosphate (DXP) and 3-amino-2-oxopropyl phosphate (1-amino-acetone-3-phosphate or AAP) to form pyridoxine 5'-phosphate (PNP) and inorganic phosphate. The sequence is that of Pyridoxine 5'-phosphate synthase from Cupriavidus pinatubonensis (strain JMP 134 / LMG 1197) (Cupriavidus necator (strain JMP 134)).